The following is a 149-amino-acid chain: Nucleoside diphosphate kinase 1 (149 aa).

The ATP site is built by lysine 9, phenylalanine 57, arginine 85, threonine 91, arginine 102, and asparagine 112. Histidine 115 acts as the Pros-phosphohistidine intermediate in catalysis.

This sequence belongs to the NDK family. As to quaternary structure, homohexamer. It depends on Mg(2+) as a cofactor.

The catalysed reaction is a 2'-deoxyribonucleoside 5'-diphosphate + ATP = a 2'-deoxyribonucleoside 5'-triphosphate + ADP. It carries out the reaction a ribonucleoside 5'-diphosphate + ATP = a ribonucleoside 5'-triphosphate + ADP. In terms of biological role, major role in the synthesis of nucleoside triphosphates other than ATP. The ATP gamma phosphate is transferred to the NDP beta phosphate via a ping-pong mechanism, using a phosphorylated active-site intermediate. This NDK is microtubule-associated. This is Nucleoside diphosphate kinase 1 (NDKR) from Oryza sativa subsp. japonica (Rice).